Consider the following 132-residue polypeptide: Small ribosomal subunit protein uS11 (132 aa).

The protein belongs to the universal ribosomal protein uS11 family. In terms of assembly, part of the 30S ribosomal subunit. Interacts with proteins S7 and S18. Binds to IF-3.

Functionally, located on the platform of the 30S subunit, it bridges several disparate RNA helices of the 16S rRNA. Forms part of the Shine-Dalgarno cleft in the 70S ribosome. The polypeptide is Small ribosomal subunit protein uS11 (Legionella pneumophila (strain Corby)).